Consider the following 193-residue polypeptide: UPF0301 protein SCO2948 (193 aa).

This sequence belongs to the UPF0301 (AlgH) family.

The polypeptide is UPF0301 protein SCO2948 (Streptomyces coelicolor (strain ATCC BAA-471 / A3(2) / M145)).